The following is a 155-amino-acid chain: Small ribosomal subunit protein uS7c (155 aa).

It belongs to the universal ribosomal protein uS7 family. Part of the 30S ribosomal subunit.

Its subcellular location is the plastid. It localises to the chloroplast. Functionally, one of the primary rRNA binding proteins, it binds directly to 16S rRNA where it nucleates assembly of the head domain of the 30S subunit. The protein is Small ribosomal subunit protein uS7c (rps7) of Butomus umbellatus (Flowering rush).